A 343-amino-acid chain; its full sequence is Selenide, water dikinase (343 aa).

Residue U16 is part of the active site. Residue U16 is a non-standard amino acid, selenocysteine. ATP is bound by residues K19 and 46-48 (GAE). Position 49 (D49) interacts with Mg(2+). Residues D66, D89, and 137-139 (GHT) each bind ATP. Residue D89 participates in Mg(2+) binding. D225 is a Mg(2+) binding site.

This sequence belongs to the selenophosphate synthase 1 family. Class I subfamily. In terms of assembly, homodimer. Mg(2+) is required as a cofactor.

The catalysed reaction is hydrogenselenide + ATP + H2O = selenophosphate + AMP + phosphate + 2 H(+). Synthesizes selenophosphate from selenide and ATP. The chain is Selenide, water dikinase from Citrifermentans bemidjiense (strain ATCC BAA-1014 / DSM 16622 / JCM 12645 / Bem) (Geobacter bemidjiensis).